The sequence spans 189 residues: UPF0494 membrane protein C977.06 (189 aa).

The next 3 membrane-spanning stretches (helical) occupy residues 78–98 (WPLL…NFEV), 120–140 (IWGP…GLIY), and 148–168 (AIPL…VAMV).

The protein belongs to the UPF0494 family.

It is found in the membrane. The sequence is that of UPF0494 membrane protein C977.06 from Schizosaccharomyces pombe (strain 972 / ATCC 24843) (Fission yeast).